A 416-amino-acid chain; its full sequence is UDP-N-acetylglucosamine 1-carboxyvinyltransferase (416 aa).

Position 22-23 (22-23 (KN)) interacts with phosphoenolpyruvate. Arginine 92 contacts UDP-N-acetyl-alpha-D-glucosamine. The active-site Proton donor is the cysteine 116. Cysteine 116 bears the 2-(S-cysteinyl)pyruvic acid O-phosphothioketal mark. UDP-N-acetyl-alpha-D-glucosamine contacts are provided by residues 121–125 (RPIDQ), aspartate 304, and isoleucine 326.

It belongs to the EPSP synthase family. MurA subfamily.

It localises to the cytoplasm. It carries out the reaction phosphoenolpyruvate + UDP-N-acetyl-alpha-D-glucosamine = UDP-N-acetyl-3-O-(1-carboxyvinyl)-alpha-D-glucosamine + phosphate. It functions in the pathway cell wall biogenesis; peptidoglycan biosynthesis. Its function is as follows. Cell wall formation. Adds enolpyruvyl to UDP-N-acetylglucosamine. The polypeptide is UDP-N-acetylglucosamine 1-carboxyvinyltransferase (Desulfatibacillum aliphaticivorans).